We begin with the raw amino-acid sequence, 142 residues long: Nucleoside diphosphate kinase (142 aa).

Residues Lys11, Phe59, Arg87, Thr93, Arg107, and Asn117 each contribute to the ATP site. His120 acts as the Pros-phosphohistidine intermediate in catalysis.

The protein belongs to the NDK family. In terms of assembly, homotetramer. The cofactor is Mg(2+).

Its subcellular location is the cytoplasm. The enzyme catalyses a 2'-deoxyribonucleoside 5'-diphosphate + ATP = a 2'-deoxyribonucleoside 5'-triphosphate + ADP. It carries out the reaction a ribonucleoside 5'-diphosphate + ATP = a ribonucleoside 5'-triphosphate + ADP. Functionally, major role in the synthesis of nucleoside triphosphates other than ATP. The ATP gamma phosphate is transferred to the NDP beta phosphate via a ping-pong mechanism, using a phosphorylated active-site intermediate. The chain is Nucleoside diphosphate kinase from Aquifex aeolicus (strain VF5).